We begin with the raw amino-acid sequence, 379 residues long: Succinyl-diaminopimelate desuccinylase (379 aa).

His-70 contributes to the Zn(2+) binding site. Asp-72 is a catalytic residue. Asp-103 is a Zn(2+) binding site. Glu-137 (proton acceptor) is an active-site residue. The Zn(2+) site is built by Glu-138, Glu-166, and His-352.

It belongs to the peptidase M20A family. DapE subfamily. As to quaternary structure, homodimer. Zn(2+) serves as cofactor. Co(2+) is required as a cofactor.

The catalysed reaction is N-succinyl-(2S,6S)-2,6-diaminopimelate + H2O = (2S,6S)-2,6-diaminopimelate + succinate. It functions in the pathway amino-acid biosynthesis; L-lysine biosynthesis via DAP pathway; LL-2,6-diaminopimelate from (S)-tetrahydrodipicolinate (succinylase route): step 3/3. Its function is as follows. Catalyzes the hydrolysis of N-succinyl-L,L-diaminopimelic acid (SDAP), forming succinate and LL-2,6-diaminopimelate (DAP), an intermediate involved in the bacterial biosynthesis of lysine and meso-diaminopimelic acid, an essential component of bacterial cell walls. This chain is Succinyl-diaminopimelate desuccinylase, found in Burkholderia orbicola (strain MC0-3).